We begin with the raw amino-acid sequence, 452 residues long: Peptidase M20 domain-containing protein SMAC_03666.2 (452 aa).

The N-terminal stretch at 1 to 28 is a signal peptide; it reads MKATSNLLLLWGTSLLSPSSAFVIDNHH. A glycan (N-linked (GlcNAc...) asparagine) is linked at Asn-140. A Zn(2+)-binding site is contributed by Asp-186. Glu-220 acts as the Proton acceptor in catalysis. Residue Glu-221 participates in Zn(2+) binding. Asn-315 carries an N-linked (GlcNAc...) asparagine glycan.

It belongs to the peptidase M20A family. Zn(2+) is required as a cofactor.

It is found in the secreted. The chain is Peptidase M20 domain-containing protein SMAC_03666.2 from Sordaria macrospora (strain ATCC MYA-333 / DSM 997 / K(L3346) / K-hell).